The chain runs to 174 residues: ATP-dependent protease subunit HslV (174 aa).

The active site involves T2. Positions 157, 160, and 163 each coordinate Na(+).

The protein belongs to the peptidase T1B family. HslV subfamily. In terms of assembly, a double ring-shaped homohexamer of HslV is capped on each side by a ring-shaped HslU homohexamer. The assembly of the HslU/HslV complex is dependent on binding of ATP.

It localises to the cytoplasm. It catalyses the reaction ATP-dependent cleavage of peptide bonds with broad specificity.. With respect to regulation, allosterically activated by HslU binding. In terms of biological role, protease subunit of a proteasome-like degradation complex believed to be a general protein degrading machinery. In Shewanella putrefaciens (strain CN-32 / ATCC BAA-453), this protein is ATP-dependent protease subunit HslV.